A 1579-amino-acid polypeptide reads, in one-letter code: Eukaryotic translation initiation factor 4 gamma 3 (1579 aa).

Disordered stretches follow at residues 1 to 35 (MNSQ…RPGV) and 128 to 326 (TQQQ…GPSL). Positions 10–25 (PFFQRPQIQPPRAAIP) are enriched in low complexity. Polar residues predominate over residues 26 to 35 (NSSPSIRPGV). The segment at 134–162 (PAKREKKTIRIRDPNQGGKDITEEIMSGG) is PABPC1-binding. Pro residues predominate over residues 167 to 183 (PTPPIGRPASTPTPPQQ). Phosphothreonine is present on Thr-168. 3 positions are modified to phosphoserine: Ser-230, Ser-232, and Ser-267. Residues 266–292 (SSPTSLPPLARSSLPSPMSAALSSQPL) are compositionally biased toward low complexity. Basic and acidic residues predominate over residues 295 to 308 (AEDKCELPSSKEED). The span at 315–326 (PTSCTAASGPSL) shows a compositional bias: polar residues. 4 positions are modified to phosphoserine: Ser-436, Ser-470, Ser-472, and Ser-490. Residues 454–470 (RTCLSKDAKEMQDKAES) are compositionally biased toward basic and acidic residues. Disordered stretches follow at residues 454 to 615 (RTCL…DTEG), 681 to 706 (RQTP…QRRE), and 724 to 744 (AENA…PESI). Acidic residues predominate over residues 471–480 (ESDGQAEETA). A compositionally biased stretch (polar residues) spans 481-501 (DPQSLHSGRSPAPVQTATTAP). Composition is skewed to basic and acidic residues over residues 506–515 (KTKEQTRTPD) and 549–563 (SERD…KAEE). Residues 589-598 (SGSADSSADG) show a composition bias toward low complexity. A compositionally biased stretch (basic and acidic residues) spans 606 to 615 (ESWKPADTEG). An EIF4E-binding region spans residues 614 to 625 (EGKKQYDREFLL). The segment at 694–1014 (VGPRRSQPGQ…EQRKVQQLMT (321 aa)) is eIF3/EIF4A-binding. HEAT repeat units follow at residues 740–778 (DPES…LTVD), 779–826 (TEER…GNTV), 827–900 (NFRK…LKML), 901–939 (TEAI…DFEK), and 940–979 (AKPR…LCNW). The MIF4G domain occupies 750–978 (FRKVRSILNK…QDVIDLRLCN (229 aa)). Residues 855-871 (KELEAASAPEERTRLHD) are compositionally biased toward basic and acidic residues. The interval 855–875 (KELEAASAPEERTRLHDELEE) is disordered. Residues 989–1018 (KTIEQIHKEAKIEEQEEQRKVQQLMTKEKR) adopt a coiled-coil conformation. 2 disordered regions span residues 1009-1037 (VQQL…QGAK) and 1067-1214 (LGSW…LSEE). The segment covering 1086-1098 (LRSSASSLNRFSP) has biased composition (low complexity). Ser-1150 is modified (phosphoserine; by CaMK1). Composition is skewed to basic and acidic residues over residues 1150-1169 (SSKD…EMLE) and 1179-1197 (DAER…ELAK). Positions 1154-1176 (LLDNQSQEEQRREMLETVKQLTG) form a coiled coil. At Ser-1212 the chain carries Phosphoserine. The 123-residue stretch at 1215–1337 (EVERKSKSII…SMRELIVEFS (123 aa)) folds into the MI domain. Positions 1406 to 1438 (SSEALSKKELSAEELSQRLEKLIMEEKADDERI) form a coiled coil. One can recognise a W2 domain in the interval 1410–1579 (LSKKELSAEE…REAEEESEDN (170 aa)). Residues 1427 to 1579 (LIMEEKADDE…REAEEESEDN (153 aa)) are EIF4A-binding. The necessary but not sufficient for MKNK1-binding stretch occupies residues 1565-1579 (FFTWLREAEEESEDN).

It belongs to the eukaryotic initiation factor 4G family. As to quaternary structure, interacts with EIF4A, EIF4E, eIF3 and PABPC1. Part of a complex with EIF4E. eIF4F is a multi-subunit complex, the composition of which varies with external and internal environmental conditions. It is composed of at least EIF4A, EIF4E and EIF4G1/EIF4G3. EIF4G1/EIF4G3 interacts through its C-terminus with the serine/threonine kinases MKNK1, and with MKNK2. Appears to act as a scaffold protein, holding these enzymes in place to phosphorylate eIF4E. Non-phosphorylated EIF4EBP1 competes with EIF4G1/EIFG3 to interact with EIF4E; insulin stimulated MAP-kinase (MAPK1 and MAPK3) phosphorylation of EIF4EBP1 causes dissociation of the complex allowing EIF4G1/EIF4G3 to bind and consequent initiation of translation. EIF4G1/EIF4G3 interacts with PABPC1 to bring about circularization of the mRNA. Interacts with FXR1; promoting translation of FXR1 target mRNAs.

Component of the protein complex eIF4F, which is involved in the recognition of the mRNA cap, ATP-dependent unwinding of 5'-terminal secondary structure and recruitment of mRNA to the ribosome. Functional homolog of EIF4G1. In Mus musculus (Mouse), this protein is Eukaryotic translation initiation factor 4 gamma 3 (Eif4g3).